The sequence spans 612 residues: Citryl-spermidine/3,4-dihydroxybenzoyl-citryl-spermidine:spermidine ligase (612 aa).

ATP is bound by residues 282-284 (SMR), K298, R310, Y390, and E461.

The protein belongs to the IucA/IucC family. As to quaternary structure, homodimer.

The enzyme catalyses N(8)-citryl-spermidine + spermidine + ATP = N(8),N'(8)-citryl-bis(spermidine) + AMP + diphosphate + H(+). It catalyses the reaction N(1)-(3,4-dihydroxybenzoyl)-N(8)-citryl-spermidine + spermidine + ATP = N(1)-(3,4-dihydroxybenzoyl)-N(8),N'(8)-citryl-bis(spermidine) + AMP + diphosphate + H(+). It participates in siderophore biosynthesis; petrobactin biosynthesis. Involved in the biosynthesis of petrobactin, a catecholate siderophore that functions in both iron acquisition and virulence. Catalyzes the ATP-dependent condensation of spermidine with N(8)-citryl-spermidine or N(1)-(3,4-dihydroxbenzoyl)-N(8)-citryl-spermidine, two intermediates in petrobactin biosynthesis pathway. The sequence is that of Citryl-spermidine/3,4-dihydroxybenzoyl-citryl-spermidine:spermidine ligase from Bacillus anthracis.